A 268-amino-acid chain; its full sequence is Phosphatidylglycerol--prolipoprotein diacylglyceryl transferase (268 aa).

7 helical membrane-spanning segments follow: residues 10–30 (VALA…LIGI), 56–76 (LVFW…VLFY), 92–112 (WKGG…ALWF), 120–140 (FFEL…AGRI), 174–194 (PSQL…LWLF), 202–222 (MAVS…VEFV), and 236–256 (WLTM…GLIW). Arg-139 serves as a coordination point for a 1,2-diacyl-sn-glycero-3-phospho-(1'-sn-glycerol).

This sequence belongs to the Lgt family.

Its subcellular location is the cell inner membrane. It catalyses the reaction L-cysteinyl-[prolipoprotein] + a 1,2-diacyl-sn-glycero-3-phospho-(1'-sn-glycerol) = an S-1,2-diacyl-sn-glyceryl-L-cysteinyl-[prolipoprotein] + sn-glycerol 1-phosphate + H(+). The protein operates within protein modification; lipoprotein biosynthesis (diacylglyceryl transfer). In terms of biological role, catalyzes the transfer of the diacylglyceryl group from phosphatidylglycerol to the sulfhydryl group of the N-terminal cysteine of a prolipoprotein, the first step in the formation of mature lipoproteins. This is Phosphatidylglycerol--prolipoprotein diacylglyceryl transferase from Pseudomonas putida (strain ATCC 700007 / DSM 6899 / JCM 31910 / BCRC 17059 / LMG 24140 / F1).